Consider the following 312-residue polypeptide: Polyamine aminopropyltransferase (312 aa).

Positions 7–247 (FFWVQEYFTP…GPLGFALAAQ (241 aa)) constitute a PABS domain. An S-methyl-5'-thioadenosine-binding site is contributed by Gln-36. His-67 and Glu-95 together coordinate spermidine. Residues Asp-115 and 147–148 (DA) contribute to the S-methyl-5'-thioadenosine site. Asp-165 functions as the Proton acceptor in the catalytic mechanism. S-methyl-5'-thioadenosine is bound at residue Pro-174.

This sequence belongs to the spermidine/spermine synthase family. In terms of assembly, homodimer or homotetramer.

It is found in the cytoplasm. It catalyses the reaction S-adenosyl 3-(methylsulfanyl)propylamine + putrescine = S-methyl-5'-thioadenosine + spermidine + H(+). Its pathway is amine and polyamine biosynthesis; spermidine biosynthesis; spermidine from putrescine: step 1/1. Catalyzes the irreversible transfer of a propylamine group from the amino donor S-adenosylmethioninamine (decarboxy-AdoMet) to putrescine (1,4-diaminobutane) to yield spermidine. In Synechococcus sp. (strain JA-2-3B'a(2-13)) (Cyanobacteria bacterium Yellowstone B-Prime), this protein is Polyamine aminopropyltransferase.